A 1613-amino-acid polypeptide reads, in one-letter code: Vitellogenin-2 (1613 aa).

The N-terminal stretch at 1–15 is a signal peptide; it reads MRSIIIASLVALALA. In terms of domain architecture, Vitellogenin spans 24-687; that stretch reads FEPKTDYHYK…EKNSFLPKDL (664 aa). An N-linked (GlcNAc...) asparagine glycan is attached at N1268. The VWFD domain occupies 1308–1477; sequence SVCKVQKNQI…SYLLKNEECE (170 aa). Intrachain disulfides connect C1310–C1440 and C1332–C1476. Residues 1491–1531 are disordered; it reads KYERDEEQSDEYSSEETYDYEQENTKKSQKNQRSQKKSDLV. Residues 1495–1512 show a composition bias toward acidic residues; it reads DEEQSDEYSSEETYDYEQ.

Expressed in the intestine of adult hermaphrodites.

It is found in the secreted. Functionally, precursor of the egg-yolk proteins that are sources of nutrients during embryonic development. Together with other vitellogenins, may play a role in modulating life-span, acting via induction of autophagy and lysosomal lipolysis. This Caenorhabditis elegans protein is Vitellogenin-2 (vit-2).